We begin with the raw amino-acid sequence, 506 residues long: Cobyric acid synthase (506 aa).

In terms of domain architecture, GATase cobBQ-type spans 251–448 (DITIAIVQLP…LHGLFDSDAF (198 aa)). Catalysis depends on Cys-332, which acts as the Nucleophile. His-440 is an active-site residue.

This sequence belongs to the CobB/CobQ family. CobQ subfamily.

It functions in the pathway cofactor biosynthesis; adenosylcobalamin biosynthesis. Its function is as follows. Catalyzes amidations at positions B, D, E, and G on adenosylcobyrinic A,C-diamide. NH(2) groups are provided by glutamine, and one molecule of ATP is hydrogenolyzed for each amidation. The polypeptide is Cobyric acid synthase (Salmonella choleraesuis (strain SC-B67)).